Reading from the N-terminus, the 223-residue chain is Putative UPF0607 protein LOC392364 (223 aa).

Over residues 110-138 (KMEVRAEEPKEATEVKDQVETQEQEDNKR) the composition is skewed to basic and acidic residues. The tract at residues 110–223 (KMEVRAEEPK…GRTPPARQHG (114 aa)) is disordered. Polar residues-rich tracts occupy residues 145–163 (EAASTSRPLETQGNPTSPR) and 174–186 (QLKSLTENNQTDK).

This sequence belongs to the UPF0607 family.

The chain is Putative UPF0607 protein LOC392364 from Homo sapiens (Human).